An 88-amino-acid chain; its full sequence is Kunitz-type U15-theraphotoxin-Hhn1r (88 aa).

Residues 1 to 27 form the signal peptide; that stretch reads MGIARILSAVLFLSVLFVVTFPTLLSA. Positions 28–33 are excised as a propeptide; the sequence is DHHDGR. Positions 37–85 constitute a BPTI/Kunitz inhibitor domain; it reads CRLPSDRGRCKASFERWYFNGTTCTKFVYGGYGGNDNRFPTEKACMKRC. 2 cysteine pairs are disulfide-bonded: Cys-37–Cys-85 and Cys-60–Cys-81.

Belongs to the venom Kunitz-type family. 01 (intermediate) subfamily. Expressed by the venom gland.

Its subcellular location is the secreted. Functionally, serine protease inhibitor that inhibits trypsin at a molar ratio of 1:1. The chain is Kunitz-type U15-theraphotoxin-Hhn1r from Cyriopagopus hainanus (Chinese bird spider).